A 503-amino-acid chain; its full sequence is Probable cytosol aminopeptidase (503 aa).

Mn(2+)-binding residues include K270 and D275. K282 is a catalytic residue. Residues D293, D352, and E354 each coordinate Mn(2+). The active site involves R356.

It belongs to the peptidase M17 family. The cofactor is Mn(2+).

It is found in the cytoplasm. The enzyme catalyses Release of an N-terminal amino acid, Xaa-|-Yaa-, in which Xaa is preferably Leu, but may be other amino acids including Pro although not Arg or Lys, and Yaa may be Pro. Amino acid amides and methyl esters are also readily hydrolyzed, but rates on arylamides are exceedingly low.. It catalyses the reaction Release of an N-terminal amino acid, preferentially leucine, but not glutamic or aspartic acids.. In terms of biological role, presumably involved in the processing and regular turnover of intracellular proteins. Catalyzes the removal of unsubstituted N-terminal amino acids from various peptides. The polypeptide is Probable cytosol aminopeptidase (Citrobacter koseri (strain ATCC BAA-895 / CDC 4225-83 / SGSC4696)).